A 367-amino-acid chain; its full sequence is Peptide chain release factor 1 (367 aa).

Residue Gln-243 is modified to N5-methylglutamine.

Belongs to the prokaryotic/mitochondrial release factor family. Methylated by PrmC. Methylation increases the termination efficiency of RF1.

The protein localises to the cytoplasm. In terms of biological role, peptide chain release factor 1 directs the termination of translation in response to the peptide chain termination codons UAG and UAA. This Acidovorax ebreus (strain TPSY) (Diaphorobacter sp. (strain TPSY)) protein is Peptide chain release factor 1.